The sequence spans 188 residues: Peptidyl-tRNA hydrolase (188 aa).

TRNA is bound at residue Tyr18. His23 acts as the Proton acceptor in catalysis. TRNA-binding residues include Tyr67, Asn69, and Asn115.

This sequence belongs to the PTH family. In terms of assembly, monomer.

It localises to the cytoplasm. The catalysed reaction is an N-acyl-L-alpha-aminoacyl-tRNA + H2O = an N-acyl-L-amino acid + a tRNA + H(+). Hydrolyzes ribosome-free peptidyl-tRNAs (with 1 or more amino acids incorporated), which drop off the ribosome during protein synthesis, or as a result of ribosome stalling. Its function is as follows. Catalyzes the release of premature peptidyl moieties from peptidyl-tRNA molecules trapped in stalled 50S ribosomal subunits, and thus maintains levels of free tRNAs and 50S ribosomes. This chain is Peptidyl-tRNA hydrolase, found in Salinibacter ruber (strain DSM 13855 / M31).